The following is a 702-amino-acid chain: Polyribonucleotide nucleotidyltransferase (702 aa).

Residues Asp491 and Asp497 each contribute to the Mg(2+) site. Residues 558 to 618 (PKMKTFMIPV…TAIEKAYQLI (61 aa)) form the KH domain. Residues 628-696 (GEKIIGPVVK…GKGKIKLQLI (69 aa)) form the S1 motif domain.

The protein belongs to the polyribonucleotide nucleotidyltransferase family. Mg(2+) serves as cofactor.

The protein localises to the cytoplasm. It carries out the reaction RNA(n+1) + phosphate = RNA(n) + a ribonucleoside 5'-diphosphate. Its function is as follows. Involved in mRNA degradation. Catalyzes the phosphorolysis of single-stranded polyribonucleotides processively in the 3'- to 5'-direction. This Spiroplasma citri protein is Polyribonucleotide nucleotidyltransferase.